A 160-amino-acid chain; its full sequence is Ureidoglycolate lyase (160 aa).

The protein belongs to the ureidoglycolate lyase family. As to quaternary structure, homodimer. Ni(2+) serves as cofactor.

The enzyme catalyses (S)-ureidoglycolate = urea + glyoxylate. Its pathway is nitrogen metabolism; (S)-allantoin degradation. In terms of biological role, catalyzes the catabolism of the allantoin degradation intermediate (S)-ureidoglycolate, generating urea and glyoxylate. Involved in the utilization of allantoin as nitrogen source. This is Ureidoglycolate lyase from Salmonella enteritidis.